A 636-amino-acid chain; its full sequence is DNA primase (636 aa).

A CHC2-type zinc finger spans residues 44-68 (CPFHDEKTPSFHVRPNHGHFHCFGC). One can recognise a Toprim domain in the interval 266–352 (HQAVVVEGYT…SGQSFVAVAA (87 aa)). Mg(2+) contacts are provided by E272, D323, and D325. Residues 443–459 (REEAKGGGRKDNNRRGQ) are compositionally biased toward basic and acidic residues. The disordered stretch occupies residues 443-481 (REEAKGGGRKDNNRRGQETAARPKPPPVQRPDPTDPTLW).

Belongs to the DnaG primase family. As to quaternary structure, monomer. Interacts with DnaB. It depends on Zn(2+) as a cofactor. The cofactor is Mg(2+).

The catalysed reaction is ssDNA + n NTP = ssDNA/pppN(pN)n-1 hybrid + (n-1) diphosphate.. RNA polymerase that catalyzes the synthesis of short RNA molecules used as primers for DNA polymerase during DNA replication. The polypeptide is DNA primase (Mycolicibacterium smegmatis (strain ATCC 700084 / mc(2)155) (Mycobacterium smegmatis)).